Reading from the N-terminus, the 290-residue chain is TIMELESS-interacting protein (290 aa).

The interval 1–59 (MLEPQENGLTDLPDYEHIEDETFPPFPPPASPGREDGEGAEPEEESGRGAPVPVPPKRT) is disordered. The segment at 67-143 (LNAERLISER…KEVQTCLKRI (77 aa)) is interaction with TIMELESS. 2 positions are modified to phosphoserine: serine 194 and serine 222. The segment covering 221–242 (NSQSLGNDLSVNTPSTQTSEAG) has biased composition (polar residues). The disordered stretch occupies residues 221-290 (NSQSLGNDLS…VEETQLDQSF (70 aa)). A phosphothreonine mark is found at threonine 233 and threonine 244.

This sequence belongs to the CSM3 family. As to quaternary structure, interacts with TIMELESS (via N-terminus), which impairs TIMELESS self-association. Associates with the MCM2-7 complex. Interacts with RPA2, PRDX2.

It is found in the cytoplasm. The protein resides in the nucleus. Functionally, plays an important role in the control of DNA replication and the maintenance of replication fork stability. Important for cell survival after DNA damage or replication stress. May be specifically required for the ATR-CHEK1 pathway in the replication checkpoint induced by hydroxyurea or ultraviolet light. Forms a complex with TIMELESS and this complex regulates DNA replication processes under both normal and stress conditions, stabilizes replication forks and influences both CHEK1 phosphorylation and the intra-S phase checkpoint in response to genotoxic stress. The protein is TIMELESS-interacting protein (TIPIN) of Bos taurus (Bovine).